The chain runs to 637 residues: Extracellular metalloproteinase 2 (637 aa).

The first 20 residues, 1 to 20 (MRSFLLASLASVATLKSAQA), serve as a signal peptide directing secretion. A propeptide spanning residues 21-244 (HPAHSTRGLS…VHAVVDYSAD (224 aa)) is cleaved from the precursor. N302, N328, N337, and N413 each carry an N-linked (GlcNAc...) asparagine glycan. H430 is a Zn(2+) binding site. The active site involves E431. A Zn(2+)-binding site is contributed by H434.

It belongs to the peptidase M36 family. The cofactor is Zn(2+).

The protein localises to the secreted. In terms of biological role, secreted metalloproteinase that allows assimilation of proteinaceous substrates. In Phaeosphaeria nodorum (strain SN15 / ATCC MYA-4574 / FGSC 10173) (Glume blotch fungus), this protein is Extracellular metalloproteinase 2 (MEP2).